A 1106-amino-acid polypeptide reads, in one-letter code: Putative pre-mRNA-splicing factor ATP-dependent RNA helicase DHX16 (1106 aa).

Disordered stretches follow at residues 73 to 100, 120 to 286, and 366 to 394; these read KIQN…DKEK, DDIV…TKSR, and YIND…WEQN. Positions 78-94 are enriched in low complexity; the sequence is TSSSSSSSSTSLSSSSS. Positions 138 to 155 are enriched in basic residues; the sequence is KRKKKEKKKEKKDKKDKK. A compositionally biased stretch (basic and acidic residues) spans 156–167; it reads DKKSSTRKKSDN. Positions 189–201 are enriched in low complexity; sequence NNENNDNNNDNNN. The span at 232-283 shows a compositional bias: basic and acidic residues; the sequence is REQREVKELSDRIKKRDEKSTKKKIVDDSETKESIERKNRLEQNEQLETERT. Residues 477–640 enclose the Helicase ATP-binding domain; that stretch reads IDAVREYQVL…FDGAPTFNIP (164 aa). Position 490–497 (490–497) interacts with ATP; it reads GETGSGKT. A DEAH box motif is present at residues 587-590; the sequence is DEAH. Residues 665–838 enclose the Helicase C-terminal domain; the sequence is TVLQIHITEP…NVVLLLKSMG (174 aa).

Belongs to the DEAD box helicase family. DEAH subfamily. DDX16/PRP8 sub-subfamily. In terms of assembly, component of pre-catalytic spliceosome complexes.

It is found in the nucleus. The protein resides in the nucleoplasm. The enzyme catalyses ATP + H2O = ADP + phosphate + H(+). Its function is as follows. Required for pre-mRNA splicing as component of the spliceosome. Contributes to pre-mRNA splicing after spliceosome formation and prior to the first transesterification reaction. This Dictyostelium discoideum (Social amoeba) protein is Putative pre-mRNA-splicing factor ATP-dependent RNA helicase DHX16 (dhx16).